The primary structure comprises 862 residues: Taxadiene synthase (862 aa).

5 residues coordinate Mg(2+): D613, D617, N757, T761, and E765. Residues 613–617 (DDMAD) carry the DDXXD motif motif.

The protein belongs to the terpene synthase family. Requires Mg(2+) as cofactor.

The catalysed reaction is (2E,6E,10E)-geranylgeranyl diphosphate = taxa-4(5),11(12)-diene + diphosphate. It participates in alkaloid biosynthesis; taxol biosynthesis; taxa-4(20),11-dien-5alpha-ol from geranylgeranyl diphosphate: step 1/2. Functionally, catalyzes the cyclization of the ubiquitous isoprenoid intermediate geranylgeranyl diphosphate to taxa-4,11-diene, the parent olefin with a taxane skeleton. In Taxus brevifolia (Pacific yew), this protein is Taxadiene synthase (TDC1).